The primary structure comprises 157 residues: MSEAQGFDALASLSSNPEAAAPAVQKIDAQGRAYATGKRKNAIARVWIKPGKGSITINGRDQEVYFARPVLRMMIAQPLQVTDREGQFDIVVTVEGSGLSGQAGAVRHGLSKALTYYEPGLRAALKPHGFLTRDSRVVERKKYGKAKARRSFQFSKR.

It belongs to the universal ribosomal protein uS9 family.

This chain is Small ribosomal subunit protein uS9, found in Caulobacter sp. (strain K31).